The chain runs to 389 residues: Arrestin-C (389 aa).

The tract at residues 369-389 is disordered; that stretch reads AQQEPSGESQEALAAEGNEGS.

The protein belongs to the arrestin family. In terms of assembly, homodimer; disulfide-linked in response to retinal illumination. Interacts with CXCR4; the interaction is dependent on the C-terminal phosphorylation of CXCR4 and modulates the calcium ion mobilization activity of CXCR4. Interacts with GPR84. Expressed in cone photoreceptors in the retina (at protein level).

It is found in the photoreceptor inner segment. The protein localises to the cell projection. It localises to the cilium. Its subcellular location is the photoreceptor outer segment. May play a role in an as yet undefined retina-specific signal transduction. Could bind to photoactivated-phosphorylated red/green opsins. In Bos taurus (Bovine), this protein is Arrestin-C (ARR3).